The sequence spans 55 residues: MAKAVTVKIKLVSTADTGYFYVTKKNSRTQTDKLSFKKYDPVARKHVEFKEAKIK.

The protein belongs to the bacterial ribosomal protein bL33 family.

The polypeptide is Large ribosomal subunit protein bL33 (Methylobacterium sp. (strain 4-46)).